A 428-amino-acid polypeptide reads, in one-letter code: Adenylosuccinate synthetase (428 aa).

Residues 12–18 (GDEGKGK) and 40–42 (GHT) each bind GTP. D13 acts as the Proton acceptor in catalysis. Residues D13 and G40 each contribute to the Mg(2+) site. IMP contacts are provided by residues 13–16 (DEGK), 38–41 (NAGH), T130, R144, Q225, T240, and R304. H41 serves as the catalytic Proton donor. Residue 300–306 (VTTGRAR) coordinates substrate. GTP-binding positions include R306, 332 to 334 (KID), and 414 to 416 (SVG).

The protein belongs to the adenylosuccinate synthetase family. Homodimer. Mg(2+) is required as a cofactor.

Its subcellular location is the cytoplasm. The catalysed reaction is IMP + L-aspartate + GTP = N(6)-(1,2-dicarboxyethyl)-AMP + GDP + phosphate + 2 H(+). It functions in the pathway purine metabolism; AMP biosynthesis via de novo pathway; AMP from IMP: step 1/2. Its function is as follows. Plays an important role in the de novo pathway of purine nucleotide biosynthesis. Catalyzes the first committed step in the biosynthesis of AMP from IMP. The chain is Adenylosuccinate synthetase from Clostridium botulinum (strain 657 / Type Ba4).